Consider the following 690-residue polypeptide: Cysteine-rich receptor-like protein kinase 21 (690 aa).

Positions 1-24 (MQKNKMVDLRAIFWFVVISSCAVA) are cleaved as a signal peptide. One can recognise a Gnk2-homologous 1 domain in the interval 25–129 (APTCIQRSDF…CLVRYSNHLI (105 aa)). Over 25-281 (APTCIQRSDF…KDGKNISTGS (257 aa)) the chain is Extracellular. N-linked (GlcNAc...) asparagine glycosylation is found at Asn-130, Asn-148, Asn-155, Asn-220, Asn-268, and Asn-276. In terms of domain architecture, Gnk2-homologous 2 spans 140 to 246 (AEYIEYKYNT…CFMRWDLQPF (107 aa)). Residues 282-302 (IVAIAVVSVVVSTVLLALGYA) form a helical membrane-spanning segment. The Cytoplasmic segment spans residues 303–690 (VSRRRKAYQS…DASITSVRPR (388 aa)). The Protein kinase domain maps to 363–640 (FHKSNKLGHG…IFRMLTNVSI (278 aa)). Residues 369–377 (LGHGGFGAV) and Lys-391 contribute to the ATP site. Phosphotyrosine is present on Tyr-436. Asp-488 acts as the Proton acceptor in catalysis. The residue at position 492 (Ser-492) is a Phosphoserine. Thr-528 bears the Phosphothreonine mark. A Phosphotyrosine modification is found at Tyr-536.

It belongs to the protein kinase superfamily. Ser/Thr protein kinase family. CRK subfamily.

Its subcellular location is the membrane. The catalysed reaction is L-seryl-[protein] + ATP = O-phospho-L-seryl-[protein] + ADP + H(+). It carries out the reaction L-threonyl-[protein] + ATP = O-phospho-L-threonyl-[protein] + ADP + H(+). The protein is Cysteine-rich receptor-like protein kinase 21 (CRK21) of Arabidopsis thaliana (Mouse-ear cress).